A 223-amino-acid polypeptide reads, in one-letter code: Small ribosomal subunit protein uS3 (223 aa).

In terms of domain architecture, KH type-2 spans 39–108 (IRKFVKKKGA…VILINIVEVK (70 aa)).

The protein belongs to the universal ribosomal protein uS3 family. As to quaternary structure, part of the 30S ribosomal subunit. Forms a tight complex with proteins S10 and S14.

In terms of biological role, binds the lower part of the 30S subunit head. Binds mRNA in the 70S ribosome, positioning it for translation. The sequence is that of Small ribosomal subunit protein uS3 from Clostridium kluyveri (strain NBRC 12016).